The chain runs to 59 residues: Antitoxin Rv0909 (59 aa).

Functionally, antitoxin component of a type II toxin-antitoxin (TA) system. Upon expression in M.smegmatis neutralizes the effect of cognate toxin Rv0910. This Mycobacterium tuberculosis (strain ATCC 25618 / H37Rv) protein is Antitoxin Rv0909.